A 149-amino-acid polypeptide reads, in one-letter code: D-aminoacyl-tRNA deacylase (149 aa).

Residues 137-138 carry the Gly-cisPro motif, important for rejection of L-amino acids motif; sequence GP.

Belongs to the DTD family. Homodimer.

It localises to the cytoplasm. It catalyses the reaction glycyl-tRNA(Ala) + H2O = tRNA(Ala) + glycine + H(+). It carries out the reaction a D-aminoacyl-tRNA + H2O = a tRNA + a D-alpha-amino acid + H(+). An aminoacyl-tRNA editing enzyme that deacylates mischarged D-aminoacyl-tRNAs. Also deacylates mischarged glycyl-tRNA(Ala), protecting cells against glycine mischarging by AlaRS. Acts via tRNA-based rather than protein-based catalysis; rejects L-amino acids rather than detecting D-amino acids in the active site. By recycling D-aminoacyl-tRNA to D-amino acids and free tRNA molecules, this enzyme counteracts the toxicity associated with the formation of D-aminoacyl-tRNA entities in vivo and helps enforce protein L-homochirality. This chain is D-aminoacyl-tRNA deacylase, found in Clostridium botulinum (strain Alaska E43 / Type E3).